We begin with the raw amino-acid sequence, 1325 residues long: SCAN domain-containing protein 3 (1325 aa).

Positions 52–134 (RQRFRQFCYQ…TLLEDLEREL (83 aa)) constitute an SCAN box domain. The stretch at 246-275 (KAKYCQLIKEVKEAKAKAKKESVDYRRLAR) forms a coiled coil. The 161-residue stretch at 366–526 (KSIKEVSSRC…TPCESAFSSE (161 aa)) folds into the Integrase catalytic domain. Residues 542-568 (ASLHTENELDQADKELENTLRAQYEEN) adopt a coiled-coil conformation.

Weakly expressed in the lung (at protein level).

The protein resides in the nucleus. This Homo sapiens (Human) protein is SCAN domain-containing protein 3.